A 496-amino-acid chain; its full sequence is Fatty acyl-CoA reductase 8 (496 aa).

It belongs to the fatty acyl-CoA reductase family.

The catalysed reaction is a long-chain fatty acyl-CoA + 2 NADPH + 2 H(+) = a long-chain primary fatty alcohol + 2 NADP(+) + CoA. Its function is as follows. Catalyzes the reduction of fatty acyl-CoA to fatty alcohols. Catalyzes specifically the formation of C16:0 fatty alcohol. In Arabidopsis thaliana (Mouse-ear cress), this protein is Fatty acyl-CoA reductase 8 (FAR8).